We begin with the raw amino-acid sequence, 232 residues long: MSIVNSIRAQIPPVHPEGYPFIGGFALVTLLFFWLWSPLGWIALVLTIWCALFFRNPVRVTPVRDDLVVSPADGRISMVTPVVPPAELGLGDKPLLRISIFMSVFNCHVNRAPVGGRIEKIVYTPGKFINAELDKASEDNERNAMVISTPSGQIGVVQIAGLIARRIVSFVRVGQTLATGERFGLIRFGSRLDVFLPEGSKALVSVGQTAIAGETVLADFRQGDGGRTYRAD.

The active-site Schiff-base intermediate with substrate; via pyruvic acid is serine 190. A Pyruvic acid (Ser); by autocatalysis modification is found at serine 190.

The protein belongs to the phosphatidylserine decarboxylase family. PSD-A subfamily. As to quaternary structure, heterodimer of a large membrane-associated beta subunit and a small pyruvoyl-containing alpha subunit. Pyruvate is required as a cofactor. Is synthesized initially as an inactive proenzyme. Formation of the active enzyme involves a self-maturation process in which the active site pyruvoyl group is generated from an internal serine residue via an autocatalytic post-translational modification. Two non-identical subunits are generated from the proenzyme in this reaction, and the pyruvate is formed at the N-terminus of the alpha chain, which is derived from the carboxyl end of the proenzyme. The post-translation cleavage follows an unusual pathway, termed non-hydrolytic serinolysis, in which the side chain hydroxyl group of the serine supplies its oxygen atom to form the C-terminus of the beta chain, while the remainder of the serine residue undergoes an oxidative deamination to produce ammonia and the pyruvoyl prosthetic group on the alpha chain.

The protein resides in the cell membrane. It carries out the reaction a 1,2-diacyl-sn-glycero-3-phospho-L-serine + H(+) = a 1,2-diacyl-sn-glycero-3-phosphoethanolamine + CO2. It functions in the pathway phospholipid metabolism; phosphatidylethanolamine biosynthesis; phosphatidylethanolamine from CDP-diacylglycerol: step 2/2. Functionally, catalyzes the formation of phosphatidylethanolamine (PtdEtn) from phosphatidylserine (PtdSer). The polypeptide is Phosphatidylserine decarboxylase proenzyme (Rhodopseudomonas palustris (strain BisA53)).